The following is a 204-amino-acid chain: Guanylate kinase (204 aa).

The Guanylate kinase-like domain occupies 3–181 (GTLYIVSAAS…AVSEMSAIFT (179 aa)). An ATP-binding site is contributed by 10-17 (AASGTGKS).

The protein belongs to the guanylate kinase family.

Its subcellular location is the cytoplasm. It carries out the reaction GMP + ATP = GDP + ADP. Its function is as follows. Essential for recycling GMP and indirectly, cGMP. This chain is Guanylate kinase (gmk), found in Xylella fastidiosa (strain 9a5c).